Reading from the N-terminus, the 216-residue chain is DNA repair and recombination protein RadB (216 aa).

This sequence belongs to the eukaryotic RecA-like protein family. RadB subfamily.

In terms of biological role, involved in DNA repair and in homologous recombination. May regulate the cleavage reactions of the branch-structured DNA. Has a very weak ATPase activity that is not stimulated by DNA. Binds DNA but does not promote DNA strands exchange. This Methanococcus maripaludis (strain C5 / ATCC BAA-1333) protein is DNA repair and recombination protein RadB.